The chain runs to 2013 residues: Cell adhesion molecule DSCAM (2013 aa).

A signal peptide spans 1–17 (MWILALSLFQSFANVFS). At 19-1594 (EPHSSLYFVN…EGLTTNEGLK (1576 aa)) the chain is on the extracellular side. Ig-like C2-type domains are found at residues 20 to 119 (PHSS…VHIK), 125 to 216 (PYTV…ARLF), 225 to 305 (PSIL…AKVI), 313 to 401 (PLKA…VQVV), 407 to 500 (PKII…ARIN), 504 to 592 (PASI…VHVT), 596 to 685 (PPFI…SQLI), 690 to 783 (PKFV…MYLT), and 787 to 883 (PAMI…LTVQ). Disulfide bonds link cysteine 46–cysteine 102, cysteine 145–cysteine 197, cysteine 246–cysteine 293, cysteine 335–cysteine 385, cysteine 428–cysteine 484, cysteine 525–cysteine 575, cysteine 617–cysteine 669, cysteine 711–cysteine 766, and cysteine 809–cysteine 865. Asparagine 78 carries an N-linked (GlcNAc...) asparagine glycan. The N-linked (GlcNAc...) asparagine glycan is linked to asparagine 470. A glycan (N-linked (GlcNAc...) asparagine) is linked at asparagine 666. Fibronectin type-III domains are found at residues 885–982 (PPDP…ADEA), 987–1086 (PPQE…TLED), 1091–1187 (PPEN…TKED), and 1191–1285 (PPAG…AKAP). N-linked (GlcNAc...) asparagine glycosylation is found at asparagine 1160 and asparagine 1250. Residues 1285-1377 (PARILTFSGT…DEIILNLQVQ (93 aa)) form the Ig-like C2-type 10 domain. Cysteine 1307 and cysteine 1359 are joined by a disulfide. 2 consecutive Fibronectin type-III domains span residues 1379-1473 (PPDQ…TLGK) and 1474-1575 (EPQF…TIPP). The helical transmembrane segment at 1595–1615 (ILVTISCILVGVLLLFVLLLV) threads the bilayer. Over 1616–2013 (VRRRRREQRL…NPYAKSYTLV (398 aa)) the chain is Cytoplasmic. The interval 1616–2013 (VRRRRREQRL…NPYAKSYTLV (398 aa)) is required for netrin-mediated axon repulsion of neuronal growth cones. Disordered regions lie at residues 1718 to 1809 (LVDV…SASS) and 1920 to 2013 (RDLS…YTLV). Residues 1799 to 1809 (SSMVSTESASS) are compositionally biased toward low complexity. A compositionally biased stretch (polar residues) spans 1949 to 1968 (EASSSTSSTREGQQSWQQGA).

As to quaternary structure, homodimer; mediates homophilic interactions to promote cell adhesion. Interacts with DCC; the interaction is abolished in response to NTN1. Interacts (via extracellular domain) with NTN1. Interacts (via extracellular domain) with UNC5C (via Ig-like C2-type domain). Interacts with PTK2. Interacts with FYN. In terms of processing, phosphorylated at tyrosine residues. Phosphorylation is enhanced by NTN1.

Its subcellular location is the cell membrane. It localises to the cell projection. It is found in the axon. The protein localises to the dendrite. The protein resides in the growth cone. Its subcellular location is the synapse. Cell adhesion molecule that plays a role in neuronal self-avoidance. Promotes repulsion between specific neuronal processes of either the same cell or the same subtype of cells. Mediates within retinal amacrine and ganglion cell subtypes both isoneuronal self-avoidance for creating an orderly dendritic arborization and heteroneuronal self-avoidance to maintain the mosaic spacing between amacrine and ganglion cell bodies. Receptor for netrin required for axon guidance independently of and in collaboration with the receptor DCC. Might also collaborate with UNC5C in NTN1-mediated axon repulsion independently of DCC. In spinal cord development plays a role in guiding commissural axons projection and pathfinding across the ventral midline to reach the floor plate upon ligand binding. Mediates intracellular signaling by stimulating the activation of MAPK8 and MAP kinase p38. Adhesion molecule that promotes lamina-specific synaptic connections in the retina: expressed in specific subsets of interneurons and retinal ganglion cells (RGCs) and promotes synaptic connectivity via homophilic interactions. The sequence is that of Cell adhesion molecule DSCAM (Dscam) from Rattus norvegicus (Rat).